Consider the following 495-residue polypeptide: Ribosomal protein uS12 methylthiotransferase RimO (495 aa).

Positions 5 to 121 (RTVALVTLGC…ISDRLQTILN (117 aa)) constitute an MTTase N-terminal domain. [4Fe-4S] cluster contacts are provided by Cys14, Cys50, and Cys84. A disordered region spans residues 145-183 (QSAGADVALPGHGAPEGLPEDLPEGLAPESGPRAPLRRR). The Radical SAM core domain maps to 184–415 (LDGSPVASVK…RLAEELVAQR (232 aa)). The [4Fe-4S] cluster site is built by Cys198, Cys202, and Cys205. One can recognise a TRAM domain in the interval 417–484 (EERVGETVHV…GVDLVAEPLP (68 aa)).

This sequence belongs to the methylthiotransferase family. RimO subfamily. Requires [4Fe-4S] cluster as cofactor.

It is found in the cytoplasm. It carries out the reaction L-aspartate(89)-[ribosomal protein uS12]-hydrogen + (sulfur carrier)-SH + AH2 + 2 S-adenosyl-L-methionine = 3-methylsulfanyl-L-aspartate(89)-[ribosomal protein uS12]-hydrogen + (sulfur carrier)-H + 5'-deoxyadenosine + L-methionine + A + S-adenosyl-L-homocysteine + 2 H(+). Functionally, catalyzes the methylthiolation of an aspartic acid residue of ribosomal protein uS12. The protein is Ribosomal protein uS12 methylthiotransferase RimO of Streptomyces avermitilis (strain ATCC 31267 / DSM 46492 / JCM 5070 / NBRC 14893 / NCIMB 12804 / NRRL 8165 / MA-4680).